A 551-amino-acid chain; its full sequence is Scaffold protein D13 ortholog (551 aa).

Belongs to the poxviridae protein D13 family. As to quaternary structure, homotrimer. Self-assembles to form a layer. Interacts with A17 (via N-terminus); this interaction is necessary for D13 association with membranes.

The protein localises to the membrane. Its function is as follows. Scaffold protein which forms a transitory spherical honeycomb lattice providing curvature and rigidity to the convex membrane of crescent and immature virions (IV). This association occurs concomitantly with viral membrane formation. Targeted by the drug rifampicin, which prevents the formation of this lattice, and hence virus morphogenesis. In the presence of rifampicin, irregularly shaped membranes that lack the honeycomb layer accumulate around areas of electron-dense viroplasm. This layer is lost from virions during maturation from IV to mature virion (MV), through the proteolysis of A17 N-terminus. In Sus scrofa (Pig), this protein is Scaffold protein D13 ortholog.